We begin with the raw amino-acid sequence, 307 residues long: Leucine-rich repeat-containing protein 59 (307 aa).

At Met1 the chain carries N-acetylmethionine. An N-acetylthreonine; in Leucine-rich repeat-containing protein 59, N-terminally processed modification is found at Thr2. Residues 2 to 244 lie on the Cytoplasmic side of the membrane; sequence TKTGSKGGNL…KPPPRKHNRS (243 aa). 5 LRR repeats span residues 10–31, 40–62, 63–84, 86–107, and 109–128; these read NLRDKLDGNELDLSLSDLNEVP, KATVLDLSCNKLSTLPSDFCGLT, HLVKLDLSKNKLQQLPADFGRL, NLQHLDLLNNRLVTLPVSFAQL, and NLKWLDLKDNPLDPVLAKVA. 2 positions are modified to phosphoserine: Ser23 and Ser25. Lys73 carries the N6-succinyllysine modification. Lys135 carries the N6-acetyllysine modification. The stretch at 148–216 forms a coiled coil; sequence MKAVQADQER…KASKREQEKK (69 aa). Residues 150–242 form a disordered region; that stretch reads AVQADQERER…PRKPPPRKHN (93 aa). Residues 154 to 221 show a composition bias toward basic and acidic residues; that stretch reads DQERERQRRL…EQEKKPKKET (68 aa). Positions 229–242 are enriched in basic residues; it reads SGSRPRKPPPRKHN. The chain crosses the membrane as a helical span at residues 245–265; the sequence is WAVLKGLLLLLLLCVAGGLVV. Residues 266 to 307 lie on the Lumenal side of the membrane; that stretch reads CRVTGLQQQPLCTSVNAIYDNAVQGLRHHEILQWVLQTDSQQ.

In terms of assembly, can form homodimers. Interacts with SGO1. Interacts with FGF1.

The protein resides in the microsome membrane. It localises to the endoplasmic reticulum membrane. Its subcellular location is the nucleus envelope. Its function is as follows. Required for nuclear import of FGF1, but not that of FGF2. Might regulate nuclear import of exogenous FGF1 by facilitating interaction with the nuclear import machinery and by transporting cytosolic FGF1 to, and possibly through, the nuclear pores. The polypeptide is Leucine-rich repeat-containing protein 59 (Lrrc59) (Rattus norvegicus (Rat)).